The chain runs to 2442 residues: CREB-binding protein (2442 aa).

Disordered stretches follow at residues 1–41 and 74–179; these read MAEN…NDLP and LRGG…CMNA. A2 carries the N-acetylalanine modification. Residues 20–30 are compositionally biased toward polar residues; sequence PGFSANDSTDF. Residues 80-90 are compositionally biased toward low complexity; the sequence is SSINPGIGNVS. Residue S121 is modified to Phosphoserine. Polar residues predominate over residues 122–131; sequence PLSQGDSSAP. Residue S124 is modified to Phosphoserine; by ATM. The segment covering 136 to 150 has biased composition (low complexity); that stretch reads QAASTSGPTPAASQA. Residues 151–172 are compositionally biased toward polar residues; sequence LNPQAQKQVGLATSSPATSQTG. R220 carries the post-translational modification Omega-N-methylarginine. Residues 227–410 are interaction with SRCAP; the sequence is PTPAMQGASS…GKACQVAHCA (184 aa). A disordered region spans residues 266-290; it reads KMGITGNTSPFGQPFSQAGGQPMGA. Positions 270–284 are enriched in polar residues; that stretch reads TGNTSPFGQPFSQAG. The TAZ-type 1 zinc-finger motif lies at 347-433; the sequence is DPEKRKLIQQ…RHDCPVCLPL (87 aa). Zn(2+) contacts are provided by H363, C367, C380, C385, H394, C398, C404, C409, H418, C422, C427, and C430. Positions 587 to 666 constitute a KIX domain; sequence GVRKGWHEHV…KIYKIQKELE (80 aa). Asymmetric dimethylarginine occurs at positions 601 and 625. K657 is subject to N6-acetyllysine. 2 stretches are compositionally biased toward polar residues: residues 794-805 and 814-823; these read LPQNQFPSSSGA and PAQTGVSQGQ. Residues 794–1083 form a disordered region; it reads LPQNQFPSSS…STSPSQPRKK (290 aa). Pro residues-rich tracts occupy residues 844–860 and 876–885; these read PCPP…PPPA and GMTPPQPAAP. 2 stretches are compositionally biased toward low complexity: residues 886–929 and 937–952; these read TQPS…VTPQ and PSVA…PTPV. Residues 973-988 show a composition bias toward polar residues; it reads PTPSSVASAETNSQQP. Residue K998 forms a Glycyl lysine isopeptide (Lys-Gly) (interchain with G-Cter in SUMO1) linkage. Positions 1011–1021 are enriched in basic and acidic residues; that stretch reads GESKGEPRSEM. Position 1014 is an N6-acetyllysine (K1014). S1030 is modified (phosphoserine). Positions 1032-1059 are enriched in basic and acidic residues; sequence VKEETDIAEQKSEPMEVDEKKPEVKVEV. Residues K1033 and K1056 each participate in a glycyl lysine isopeptide (Lys-Gly) (interchain with G-Cter in SUMO1) cross-link. Positions 1066 to 1078 are enriched in low complexity; that stretch reads SSNGTASQSTSPS. A Phosphoserine modification is found at S1076. In terms of domain architecture, Bromo spans 1085 to 1192; that stretch reads FKPEELRQAL…EVFEQEIDPV (108 aa). The interval 1124–1170 is interaction with histone; sequence DYFDIVKNPMDLSTIKRKLDTGQYQEPWQYVDDVWLMFNNAWLYNRK. Residues 1162–1180 form an interaction with ASF1A region; the sequence is NNAWLYNRKTSRVYKFCSK. K1216 carries the N6-acetyllysine modification. The CBP/p300-type HAT domain occupies 1323-1700; it reads KFSAKRLQTT…MLVELHTQGQ (378 aa). Residues S1382 and S1386 each carry the phosphoserine; by IKKA modification. The interval 1433–1435 is interaction with histone; that stretch reads YLD. Residues 1434-1436, 1446-1447, I1493, R1498, and W1502 contribute to the acetyl-CoA site; these read LDS and RT. The interaction with TRERF1 stretch occupies residues 1460 to 1891; sequence YVKKLGYVTG…LPSPTSAPPG (432 aa). Basic and acidic residues predominate over residues 1556 to 1568; it reads LEQEEEERKKEES. Positions 1556-1615 are disordered; sequence LEQEEEERKKEESTAASETTEGSQGDSKNAKKKNNKKTNKNKSSISRANKKKPSMPNVSN. Residues K1583, K1591, K1592, K1595, and K1597 each carry the N6-acetyllysine modification. Over residues 1585–1595 the composition is skewed to basic residues; sequence AKKKNNKKTNK. The segment at 1702 to 1750 adopts a ZZ-type zinc-finger fold; the sequence is RFVYTCNECKHHVETRWHCTVCEDYDLCINCYNTKSHAHKMVKWGLGLD. Zn(2+) is bound by residues C1707, C1710, C1720, C1723, C1729, C1732, H1738, and H1740. 2 positions are modified to N6-acetyllysine: K1741 and K1744. A Phosphoserine modification is found at S1763. Residues 1765-1846 form a TAZ-type 2 zinc finger; that stretch reads QESRRLSIQR…KCPVPFCLNI (82 aa). 2 disordered regions span residues 1874 to 1959 and 1977 to 2028; these read TRNV…VEAA and INNS…PLPQ. Residues 1900 to 1912 show a composition bias toward pro residues; the sequence is PQTPQPPAQPQPS. A compositionally biased stretch (polar residues) spans 1925–1940; it reads ARTQPPTTVSTGKPTS. The span at 1943–1954 shows a compositional bias: pro residues; that stretch reads PAPPPPAQPPPA. Residues 2018-2027 show a composition bias toward low complexity; sequence PGQWQQAPLP. A phosphoserine mark is found at S2063, S2076, and S2079. Low complexity-rich tracts occupy residues 2112-2137, 2146-2160, 2196-2219, 2228-2263, and 2294-2305; these read QPGM…HQQP, QAGV…QQQA, QLLQ…QGSA, HGQF…SMGQ, and RILQQQQMKQQI. Disordered stretches follow at residues 2112–2263 and 2294–2433; these read QPGM…SMGQ and RILQ…TTGD. Polar residues-rich tracts occupy residues 2315-2327 and 2334-2343; these read SPQQ…QPQA and QIATSLSNQV. Residues 2349-2372 show a composition bias toward pro residues; the sequence is VQSPRPQSQPPHSSPSPRIQPQPS. S2351 is subject to Phosphoserine. A compositionally biased stretch (polar residues) spans 2411–2424; it reads QLNTPSRSALSSEL.

In terms of assembly, found in a complex containing NCOA2; NCOA3; IKKA; IKKB and IKBKG. Probably part of a complex with HIF1A and EP300. Interacts with GATA1; the interaction results in acetylation and enhancement of transcriptional activity of GATA1. Interacts with MAF and ZCCHC12. Interacts with DAXX; the interaction is dependent on CBP sumoylation and results in suppression of the transcriptional activity via recruitment of HDAC2 to DAXX. Interacts with phosphorylated CREB1. Interacts with CITED4 (C-terminal region). Interacts (via the TAZ-type 1 domain) with HIF1A. Interacts with SRCAP, CARM1, ELF3, MLLT7/FOXO4, N4BP2, NCOA1, NCOA3, NCOA6, PCAF, DDX5, DDX17, PELP1, PML, SMAD1, SMAD2, SMAD3, SPIB and TRERF1. Interacts with KLF1; the interaction results in acetylation of KLF1 and enhancement of its transcriptional activity. Interacts with MTDH. Interacts with NFATC4. Interacts with MAFG; the interaction acetylates MAFG in the basic region and stimulates NFE2 transcriptional activity through increasing its DNA-binding activity. Interacts with IRF2; the interaction acetylates IRF2 and regulates its activity on the H4 promoter. Interacts with IRF3 (when phosphorylated); forming the dsRNA-activated factor 1 (DRAF1), a complex which activates the transcription of the type I interferon genes. Interacts (via N-terminus) with SS18L1/CREST (via C-terminus). Interacts with MECOM. Interacts with CITED1 (via C-terminus). Interacts with FOXO1; the interaction acetylates FOXO1 and inhibits its transcriptional activity. Interacts with NPAS2, CLOCK and BMAL1. Interacts with ASF1A and ASF1B; this promotes histone acetylation. Interacts with acetylated TP53/p53 and with the acetylated histones H3 and H4. Interacts (via transactivation domain and C-terminus) with PCNA; the interaction occurs on chromatin in UV-irradiated damaged cells. Interacts with DHX9 (via N-terminus); this interaction mediates association with RNA polymerase II holoenzyme and stimulates CREB-dependent transcriptional activation. Interacts with SMAD4; negatively regulated by ZBTB7A. Interacts with DUX4 (via C-terminus). Forms a complex with KMT2A and CREB1. Interacts with DDX3X; this interaction may facilitate HNF4A acetylation. Interacts with MSX1; the interaction may inhibit MSX1 autoinactivation. Interacts with ACSS2. As to quaternary structure, (Microbial infection) Interacts with HTLV-1 Tax, p30II and HBZ. (Microbial infection) Interacts with human herpes virus 8/HHV-8 protein vIRF-1; this interaction inhibits CREBBP binding to IRF3. In terms of assembly, (Microbial infection) Interacts with HIV-1 Tat. Methylation of the KIX domain by CARM1 blocks association with CREB. This results in the blockade of CREB signaling, and in activation of apoptotic response. Post-translationally, phosphorylated by CHUK/IKKA at Ser-1382 and Ser-1386; these phosphorylations promote cell growth by switching the binding preference of CREBBP from TP53 to NF-kappa-B. Phosphorylated by _ at Ser-124 in response to DNA damage, promoting interaction with MRE11 and lactylation of MRE11. In terms of processing, sumoylation negatively regulates transcriptional activity via the recruitment of DAAX. Autoacetylation is required for binding to protein substrates, such as acetylated histones and acetylated TP53/p53. Autoacetylation is induced by glucose and fatty acids.

It is found in the cytoplasm. The protein resides in the nucleus. The enzyme catalyses L-lysyl-[histone] + acetyl-CoA = N(6)-acetyl-L-lysyl-[histone] + CoA + H(+). It catalyses the reaction L-lysyl-[protein] + acetyl-CoA = N(6)-acetyl-L-lysyl-[protein] + CoA + H(+). The catalysed reaction is (S)-lactoyl-CoA + L-lysyl-[protein] = N(6)-[(S)-lactoyl]-L-lysyl-[protein] + CoA + H(+). Its function is as follows. Acetylates histones, giving a specific tag for transcriptional activation. Mediates acetylation of histone H3 at 'Lys-18' and 'Lys-27' (H3K18ac and H3K27ac, respectively). Also acetylates non-histone proteins, like DDX21, FBL, IRF2, MAFG, NCOA3, POLR1E/PAF53 and FOXO1. Binds specifically to phosphorylated CREB and enhances its transcriptional activity toward cAMP-responsive genes. Acts as a coactivator of ALX1. Acts as a circadian transcriptional coactivator which enhances the activity of the circadian transcriptional activators: NPAS2-BMAL1 and CLOCK-BMAL1 heterodimers. Acetylates PCNA; acetylation promotes removal of chromatin-bound PCNA and its degradation during nucleotide excision repair (NER). Acetylates POLR1E/PAF53, leading to decreased association of RNA polymerase I with the rDNA promoter region and coding region. Acetylates DDX21, thereby inhibiting DDX21 helicase activity. Acetylates FBL, preventing methylation of 'Gln-105' of histone H2A (H2AQ104me). In addition to protein acetyltransferase, can use different acyl-CoA substrates, such as lactoyl-CoA, and is able to mediate protein lactylation. Catalyzes lactylation of MRE11 in response to DNA damage, thereby promoting DNA double-strand breaks (DSBs) via homologous recombination (HR). Functions as a transcriptional coactivator for SMAD4 in the TGF-beta signaling pathway. The protein is CREB-binding protein of Homo sapiens (Human).